Reading from the N-terminus, the 90-residue chain is Acyl-CoA-binding protein (90 aa).

The span at 1-16 (MGLKEDFEEHAEKAKT) shows a compositional bias: basic and acidic residues. A disordered region spans residues 1 to 20 (MGLKEDFEEHAEKAKTLPEN). The region spanning 3–88 (LKEDFEEHAE…VKQLLGEAAA (86 aa)) is the ACB domain. An acyl-CoA is bound by residues 30-34 (YGLYK), K56, and Y75.

Belongs to the ACBP family.

Binds medium- and long-chain acyl-CoA esters with very high affinity and may function as an intracellular carrier of acyl-CoA esters. The chain is Acyl-CoA-binding protein from Ricinus communis (Castor bean).